A 569-amino-acid chain; its full sequence is MITIAESHPQIHHSPPDTTAPSTPPTATIFRSRLPDIVLSNHLPLHEYLFENTLTSPSPCIISASTGRSYSFAETHLLSRKTASFLSSRCGVRRGGVVMLLLHNCPEFVFSFLGSSMLGAVTTAANPFCTPQEIKKQLLASGATVIITQSAYASKISRDDDVEDLIVVTVSDNELERHAAPPEGCVSFSEVESADEDAVPDAVGVGPEDAVAMPFSSGTTGLPKGVVLTHKSMTSSVGQIVDGENPNLHLRKGEDVLLCVLPLFHIFSLNSVLLCGLRTGAAVVIMARFEMEGMLETIQRWGVSVAAVVPPLVLALAKNPLVEKYDMGTVRMVLSGAAPLGKELEAVLKGRLPQAVLGQGYGMTEAGPVISMSPGFAKQPTPVKSGSCGTVVRNAELKVMDPETGFSLGRNQPGEICVRGPQIMKGYLNDPEATSATIDVEGWLHTGDVGYVDDDDEVFIVDRVKELIKFKGFQVPPAELEALLLGHPSIADAAVIPQNDEVAGEVPVAFVVPSKSSDLTEEIVKEFISKQVVFYKRIHRVYFIHAIPKSPSGKILRKDLRAKVASFSS.

A disordered region spans residues 1–24 (MITIAESHPQIHHSPPDTTAPSTP). ATP is bound by residues 216–220 (SSGTT), histidine 265, 337–339 (AAP), 359–360 (QG), threonine 364, aspartate 448, arginine 463, and lysine 554. The interval 290 to 359 (EMEGMLETIQ…GRLPQAVLGQ (70 aa)) is SBD1. The interval 360 to 427 (GYGMTEAGPV…VRGPQIMKGY (68 aa)) is SBD2.

This sequence belongs to the ATP-dependent AMP-binding enzyme family. As to expression, mostly expressed in stems, and, to a lower extent, in bulbs.

It carries out the reaction (E)-4-coumarate + ATP + CoA = (E)-4-coumaroyl-CoA + AMP + diphosphate. It functions in the pathway phytoalexin biosynthesis; 3,4',5-trihydroxystilbene biosynthesis; 3,4',5-trihydroxystilbene from trans-4-coumarate: step 1/2. Produces CoA thioesters of a variety of hydroxy- and methoxy-substituted cinnamic acids, which are used to synthesize several phenylpropanoid-derived compounds, including anthocyanins, flavonoids, isoflavonoids, coumarins, lignin, suberin and wall-bound phenolics. This chain is 4-coumarate-CoA ligase 2, found in Narcissus pseudonarcissus (Daffodil).